The chain runs to 177 residues: Translation initiation factor IF-3 (177 aa).

This sequence belongs to the IF-3 family. In terms of assembly, monomer.

Its subcellular location is the cytoplasm. In terms of biological role, IF-3 binds to the 30S ribosomal subunit and shifts the equilibrium between 70S ribosomes and their 50S and 30S subunits in favor of the free subunits, thus enhancing the availability of 30S subunits on which protein synthesis initiation begins. The polypeptide is Translation initiation factor IF-3 (Elusimicrobium minutum (strain Pei191)).